A 74-amino-acid chain; its full sequence is Cytochrome c oxidase copper chaperone 1 (74 aa).

The tract at residues 1–30 is disordered; that stretch reads MTDQPAQNGLIPPPTSEPSKAAASAETKPK. Residues Cys34 and Cys35 each contribute to the Cu cation site. Residues 34–74 enclose the CHCH domain; that stretch reads CCACPDTKKLRDECIVEHGESACTKWIEAHKICLRAEGFNV. 2 short sequence motifs (cx9C motif) span residues 37-47 and 56-66; these read CPDTKKLRDEC and CTKWIEAHKIC. 2 disulfide bridges follow: Cys37-Cys66 and Cys47-Cys56.

Belongs to the COX17 family.

It is found in the mitochondrion intermembrane space. Its function is as follows. Copper chaperone for cytochrome c oxidase (COX). Binds 2 copper ions and delivers them to the Cu(A) site of COX. Can complement the yeast mutant cox17. In Arabidopsis thaliana (Mouse-ear cress), this protein is Cytochrome c oxidase copper chaperone 1 (COX17-1).